The sequence spans 37 residues: Protease 2 large chain (37 aa).

The span at 1-14 (NDGNGRDSDPHDPG) shows a compositional bias: basic and acidic residues. Residues 1–37 (NDGNGRDSDPHDPGDWTTAGQCGLWQPARNSQHWTLV) form a disordered region. Positions 28 to 37 (ARNSQHWTLV) are enriched in polar residues.

It belongs to the peptidase S8 family. In terms of assembly, heterodimer of a large and a small chain.

It localises to the secreted. This is Protease 2 large chain from Achromobacter lyticus.